A 224-amino-acid chain; its full sequence is Ribose-5-phosphate isomerase A (224 aa).

Substrate-binding positions include 26-29 (TGST), 82-85 (DGAD), and 95-98 (KGGG). The active-site Proton acceptor is E104. Substrate is bound at residue K122.

It belongs to the ribose 5-phosphate isomerase family. In terms of assembly, homodimer.

The catalysed reaction is aldehydo-D-ribose 5-phosphate = D-ribulose 5-phosphate. It participates in carbohydrate degradation; pentose phosphate pathway; D-ribose 5-phosphate from D-ribulose 5-phosphate (non-oxidative stage): step 1/1. Functionally, catalyzes the reversible conversion of ribose-5-phosphate to ribulose 5-phosphate. In Lactococcus lactis subsp. cremoris (strain MG1363), this protein is Ribose-5-phosphate isomerase A.